The following is a 336-amino-acid chain: MNFMKRNVEKEVTDQLAYRRKMLQDWRGERLTGHQINLASIDLNLLVALEALLEYRNVTHAGQHIGRSQPAMSRALGRLRGLFNDDLLVRSSTGLIPTPQGEHLAQRLPSALRTIREMVTSRSVISKEWGRGATLAIPDHQALAVLPRLLPWLRERAPHLDTLACLPFDRAVRGLEQGDIDLAVGHIDVQLPGYFRRSLYTDRFACLLRHGHPALAQEWTIDNFATLRHAAISTDSPDHFGPIYDHLPNLRADRSPILFSSVLTAAVVASATDLVLLVPRRVATQVSAMLPLRVVDPPLEPAPYKVMLIWHERCHHDPQHKWLRKEVAAALETGAD.

An HTH lysR-type domain is found at Ile-41–Thr-98. The H-T-H motif DNA-binding region spans Val-58–Gly-77.

It belongs to the LysR transcriptional regulatory family.

Functionally, acts in trans to stimulate nod gene expression via nodD3 and exo gene expression via SyrA. The sequence is that of HTH-type transcriptional regulator SyrM (syrM) from Rhizobium etli.